The primary structure comprises 720 residues: MAPPRNVVKIAIKMRDAIPQLIQLDQAKPLAAVLKEVCDAWSLTHSERYALQFADGHRRYITENNRAEIKNGSILCLSTAPDLEAEQLLGGLQSNSPEGRREALRRLVPLASDMIFAREVISRNGLQILGTIIEDGDDLGEVLALSLRAFSELMEHGVVSWETLSIPFVRKVVCYVNMNLMDASVPPLALGLLESVTLSSPALGQLVKSEVPLDRLLVHLQVMNQQLQTKAMALLTALLQGASPVERKHMLDYLWQRNLRQFIYKNIIHSAAPMGDEMAHHLYVLQALMLGLLEPRMRTPLDPYSQEQREQLQVLRQAAFEVEGESSGAGLSADRRRSLCAREFRKLGFSNSNPAQDLERVPPGLLALDNMLYFSRNAPSAYSRFVLENSSREDKHECPFARGSIQLTVLLCELLRVGEPCSETAQDFSPMFFGQDQSFHELFCVGIQLLNKTWKEMRATQEDFDKVMQVVREQLARTLALKPTSLELFRTKVNALTYGEVLRLRQTERLHQEGTLAPPILELREKLKPELMGLIRQQRLLRLCEGTLFRKISSRRRQDKLWFCCLSPNHKLLQYGDMEEGASPPTLESLPEQLPVADMRALLTGKDCPHVREKGSGKQNKDLYELAFSISYDRGEEEAYLNFIAPSKREFYLWTDGLSALLGSPMGSEQTRLDLEQLLTMETKLRLLELENVPIPERPPPVPPPPTNFNFCYDCSIAEP.

Residues 307 to 479 (EQREQLQVLR…VVREQLARTL (173 aa)) form the ELMO domain. In terms of domain architecture, PH spans 542-664 (RLCEGTLFRK…TDGLSALLGS (123 aa)). Positions 696–706 (PERPPPVPPPP) match the SH3-binding motif.

Probably interacts directly with the SH3-domain of DOCK1 via its SH3-binding site. Part of a complex with DOCK1 and RAC1. Interacts with ADGRB3.

The protein localises to the cytoplasm. Its function is as follows. Involved in cytoskeletal rearrangements required for phagocytosis of apoptotic cells and cell motility. Acts in association with DOCK1 and CRK. Was initially proposed to be required in complex with DOCK1 to activate Rac Rho small GTPases. May enhance the guanine nucleotide exchange factor (GEF) activity of DOCK1. In Homo sapiens (Human), this protein is Engulfment and cell motility protein 3 (ELMO3).